The chain runs to 1843 residues: MSDKVSTSLAAQLHSHALASAEAGGIGGVNGGPIACHASTDKDAQAPPLQFEMDAPAAAISAQLNFKIVPADSLPGLSYQDMFASMNTSQISNASTESSCSPPIQGAVPPPKPSRHMAVQPLNSKSCRFPKLEECAHFHYERVQLGPLSVQLLDDKSEHMGSSIASQSLGGDLPHSSLRSFSPESCWFIIRVCPQRCEPFLIKRSFENMQLLDEMLHRCVYDRKISGLRNMEELAAELPSESDVEYAVAKYLERFSKIASDSLTCGTILTWLQLDNKGRRLPLADGETQRTINTPAVGAAYGVRRYQAQAPDEINIEVGDMISVIDMPSPAESIWWRGKKSHLQKSLYEVGFFPQSCVATIGDKVPRNFPMPAPLVGHLDASPTKPVLRKHGKLIAFFRSFILSRPSRRRLKQSGIYRERVFNCDLSEHLLNSGQDIPMVLRSCAEFIENYGVIDGIYRLSGITSNIQRLRRAFDEERVPDLGNPEMKQDIHAVSSLLKMYFRELPNPLCTYQLYDNFVEAIQVKADEADERLRLMKETVLKLPPPHYRTLKYLAEHLYKVSQHHGRTGMTDKNLAIVWAPNLLRSPALESGGVAALRGVGVQAVVTEYLIRNCHNIFDALDDHPARHSMVASATAAAANAAGGELRLESLTDCESLLVEQREQDQSLGVVERPKSLSTGGAKLISLEEAQERHSRVEGADLKQSLPISMLTSASSNAASNIGSYIEVGGGPSSLPDKYHTVLSAPRSWQKRKPDKTPSWKSIFSRSQRQGNPDPGQKITTDVKDSVASRVSFVQASHAHASKELTKHDKPKSIELLETTSNERDPKPMDLCIRSNSIDSLRTVGHSRSVSHDSYFDLLQSPQRGHMTTCPSRELSELGLNFDREEPEMRIFSESESLVSSPRVGKENVPPASGSATRRIMRARPEDFSSQTNSVNPSPKKQPRLNLLSPSSARTMPPPPLSAPGTASSSCGHESGGAENCCKRYKLEDQLCDIQFIDCGTPENVPTTQQQFASVEVHPPPKPARANQSPISSSNGASVGSSSSSTRYSYPSVQLGAKRKEQQDAKERFSYQGTFTQPGQKQESSAPRPVHSTNNGATLRKPRVEPVEDGQIKLHVPTPTTPARSPRYSLLLCDTESSDNSSAVNTPQYDMEPLMLTSAMSGVSGVSSNVQQQQLLLGVDASSSYLGSSHESLGQNINNHHDAEQRDMNALKRELSLDLNPLQPRLPQPANRAATLPVKDQLQAAAAAMCSSPNNSNFTDNTSQSVTPSEYGYQHLQRQLSMHSLLATDESSPVYEDFEQTPVKMVPSPIKSTISITYKSPEKEKKPSAILETNFDENTVYEQVKLFRNSVTEVNQMLHERSSLKQIAEEEQHDGGAYKAAEMTQQLLQLEQEHHDHEEQQEKEPEDEEQSQLLYENIELRKPKTVYENLRGEEMKFITEEQKPNVDRIELDSLDSLPDNMEHEQSSPSKSPTFSVKELANKFESSPVEQLPNFDFSVRGGSMKKPNELSVPKTMPAPVPLKKLNSSAQKITRSLDENAFVREFGGKQLQDLSLSNKLPEVMSEVNSRRKSFDFTRPKTLNPPKRLPGMSITEEICQKRVGEMEAITPTTENRISLIQQNNMPKEQQSSANQFLPPAGRKNVLTGVVLDRERIDKIKEERRQQLTQKYYGDTLKSRSRTELNSEDNFPAAESLRIKSKSRGDMHALQKDIDMNLKQLSRVTGGGSECTLHTGLSQGNGQEHLGQQRVRRISDEKNQNCDTSNGGVSGITSTSLLSVKTTAQKYGSTSKTPANKFERSQPMPRDRLQRNSLAESNAGTNNREKISPQFSIRDVTAMFESRSQNQ.

Residues 94–117 (ASTESSCSPPIQGAVPPPKPSRHM) form a disordered region. Phosphoserine occurs at positions 166, 168, and 180. The region spanning 295–363 (PAVGAAYGVR…PQSCVATIGD (69 aa)) is the SH3 domain. In terms of domain architecture, Rho-GAP spans 424–618 (CDLSEHLLNS…YLIRNCHNIF (195 aa)). The interval 746-780 (PRSWQKRKPDKTPSWKSIFSRSQRQGNPDPGQKIT) is disordered. A compositionally biased stretch (polar residues) spans 759–771 (SWKSIFSRSQRQG). A phosphoserine mark is found at S837 and S840. T843 is subject to Phosphothreonine. 4 positions are modified to phosphoserine: S851, S861, S872, and S876. Disordered stretches follow at residues 894-975 (ESES…GHES) and 1013-1106 (ASVE…RVEP). Positions 928 to 939 (FSSQTNSVNPSP) are enriched in polar residues. S1029 is modified (phosphoserine). The span at 1029 to 1053 (SPISSSNGASVGSSSSSTRYSYPSV) shows a compositional bias: low complexity. Basic and acidic residues predominate over residues 1058–1069 (KRKEQQDAKERF). Over residues 1071–1097 (YQGTFTQPGQKQESSAPRPVHSTNNGA) the composition is skewed to polar residues. Phosphothreonine occurs at positions 1118 and 1121. 4 positions are modified to phosphoserine: S1125, S1216, S1281, and S1284. The stretch at 1378–1404 (YKAAEMTQQLLQLEQEHHDHEEQQEKE) forms a coiled coil. Residues S1453 and S1456 each carry the phosphoserine modification. T1679 carries the phosphothreonine modification. Disordered regions lie at residues 1721-1745 (TGGGSECTLHTGLSQGNGQEHLGQQ) and 1779-1829 (TAQK…QFSI). The segment covering 1779–1790 (TAQKYGSTSKTP) has biased composition (polar residues). Residues 1793 to 1806 (KFERSQPMPRDRLQ) show a composition bias toward basic and acidic residues. Residues 1807–1818 (RNSLAESNAGTN) show a composition bias toward polar residues.

As to expression, ubiquitously expressed.

Its function is as follows. Probably functions as a GTPase-activating protein (GAP) for RAC1 and/or CDC42. Required for optic stalk formation. In Drosophila melanogaster (Fruit fly), this protein is GTPase-activating protein CdGAPr (CdGAPr).